Consider the following 461-residue polypeptide: CBL-interacting protein kinase 5 (461 aa).

One can recognise a Protein kinase domain in the interval 12–266 (YELGRMLGQG…VEKLVEHPWF (255 aa)). ATP-binding positions include 18–26 (LGQGTFAKV) and lysine 41. Catalysis depends on aspartate 134, which acts as the Proton acceptor. The activation loop stretch occupies residues 152 to 181 (DFGLSAFKECQKQDGLLHTTCGTPAYVAPE). The 35-residue stretch at 300 to 334 (EGKAKEPASSLKPVSLNAFDIISLSKGFDLSGLFE) folds into the NAF domain. Positions 340 to 369 (KADSRFMTQKPASAIVSKLEQIAETESFKV) are PPI. The segment at 440-461 (HPSLAQSSTLTQSSKSISRHAI) is disordered. Residues 442–455 (SLAQSSTLTQSSKS) show a composition bias toward low complexity.

It belongs to the protein kinase superfamily. CAMK Ser/Thr protein kinase family. SNF1 subfamily. Requires Mn(2+) as cofactor.

The enzyme catalyses L-seryl-[protein] + ATP = O-phospho-L-seryl-[protein] + ADP + H(+). It carries out the reaction L-threonyl-[protein] + ATP = O-phospho-L-threonyl-[protein] + ADP + H(+). CIPK serine-threonine protein kinases interact with CBL proteins. Binding of a CBL protein to the regulatory NAF domain of CIPK protein lead to the activation of the kinase in a calcium-dependent manner. This Oryza sativa subsp. japonica (Rice) protein is CBL-interacting protein kinase 5 (CIPK5).